The chain runs to 255 residues: 5'-nucleotidase SurE (255 aa).

Asp8, Asp9, Ser40, and Asn93 together coordinate a divalent metal cation.

The protein belongs to the SurE nucleotidase family. A divalent metal cation serves as cofactor.

It localises to the cytoplasm. The enzyme catalyses a ribonucleoside 5'-phosphate + H2O = a ribonucleoside + phosphate. Nucleotidase that shows phosphatase activity on nucleoside 5'-monophosphates. The sequence is that of 5'-nucleotidase SurE from Rhodopseudomonas palustris (strain BisB18).